A 70-amino-acid chain; its full sequence is Large ribosomal subunit protein eL24 (70 aa).

Zn(2+) contacts are provided by Cys-6, Cys-9, Cys-32, and Cys-36. The segment at 6–36 (CSYCGRPIPPGYGIMYVRVDGVVLRFCSRRC) adopts a C4-type zinc-finger fold.

Belongs to the eukaryotic ribosomal protein eL24 family. In terms of assembly, part of the 50S ribosomal subunit. Forms a cluster with proteins L3 and L14. It depends on Zn(2+) as a cofactor.

In terms of biological role, binds to the 23S rRNA. The polypeptide is Large ribosomal subunit protein eL24 (Caldivirga maquilingensis (strain ATCC 700844 / DSM 13496 / JCM 10307 / IC-167)).